Consider the following 77-residue polypeptide: Protein NS4 (77 aa).

It is found in the host cytoplasm. Its subcellular location is the host nucleus. The protein resides in the host nucleolus. Its function is as follows. May function as a nucleic acid binding protein that modulates transcription of genes participating in the IFN response. In Antilocapra americana (Pronghorn), this protein is Protein NS4 (Segment-9).